The primary structure comprises 270 residues: 25S rRNA adenine-N(1) methyltransferase (270 aa).

2 residues coordinate S-adenosyl-L-methionine: Gly111 and Asp131.

This sequence belongs to the BMT2 family.

It is found in the nucleus. The protein localises to the nucleolus. Functionally, S-adenosyl-L-methionine-dependent methyltransferase that specifically methylates the N(1) position of an adenine present in helix 65 in 25S rRNA. The sequence is that of 25S rRNA adenine-N(1) methyltransferase from Schizosaccharomyces pombe (strain 972 / ATCC 24843) (Fission yeast).